A 93-amino-acid polypeptide reads, in one-letter code: MLRTTFLRTPRQLMRKSPRASFSIVTRAAFPHLKNNQDEAEKKEQGLFDSNKKRLDTLEHGKNPDYKQPGMEDLKKKGDDARIEQNRPDDGVY.

A mitochondrion-targeting transit peptide spans 1 to 25; the sequence is MLRTTFLRTPRQLMRKSPRASFSIV. The interval 30 to 93 is disordered; the sequence is FPHLKNNQDE…EQNRPDDGVY (64 aa). A compositionally biased stretch (basic and acidic residues) spans 35-93; sequence NNQDEAEKKEQGLFDSNKKRLDTLEHGKNPDYKQPGMEDLKKKGDDARIEQNRPDDGVY.

Its subcellular location is the mitochondrion. This is Protein FMP16, mitochondrial (FMP16) from Saccharomyces cerevisiae (strain ATCC 204508 / S288c) (Baker's yeast).